A 256-amino-acid chain; its full sequence is Small ribosomal subunit protein eS1 (256 aa).

The segment covering 1–18 (MAVGKNKRLSKGKKGLKK) has biased composition (basic residues). The interval 1-22 (MAVGKNKRLSKGKKGLKKKTQD) is disordered. A2 carries the N-acetylalanine; partial modification.

Belongs to the eukaryotic ribosomal protein eS1 family. As to quaternary structure, component of the small ribosomal subunit. Mature ribosomes consist of a small (40S) and a large (60S) subunit. The 40S subunit contains about 33 different proteins and 1 molecule of RNA (18S). The 60S subunit contains about 49 different proteins and 3 molecules of RNA (25S, 5.8S and 5S).

It localises to the cytoplasm. This chain is Small ribosomal subunit protein eS1, found in Pyricularia oryzae (strain Y34) (Rice blast fungus).